The following is a 287-amino-acid chain: Glycine--tRNA ligase alpha subunit (287 aa).

It belongs to the class-II aminoacyl-tRNA synthetase family. As to quaternary structure, tetramer of two alpha and two beta subunits.

It localises to the cytoplasm. It catalyses the reaction tRNA(Gly) + glycine + ATP = glycyl-tRNA(Gly) + AMP + diphosphate. This Petrotoga mobilis (strain DSM 10674 / SJ95) protein is Glycine--tRNA ligase alpha subunit.